Reading from the N-terminus, the 343-residue chain is UDP-3-O-acylglucosamine N-acyltransferase (343 aa).

His238 serves as the catalytic Proton acceptor.

It belongs to the transferase hexapeptide repeat family. LpxD subfamily. As to quaternary structure, homotrimer.

The enzyme catalyses a UDP-3-O-[(3R)-3-hydroxyacyl]-alpha-D-glucosamine + a (3R)-hydroxyacyl-[ACP] = a UDP-2-N,3-O-bis[(3R)-3-hydroxyacyl]-alpha-D-glucosamine + holo-[ACP] + H(+). It functions in the pathway bacterial outer membrane biogenesis; LPS lipid A biosynthesis. Functionally, catalyzes the N-acylation of UDP-3-O-acylglucosamine using 3-hydroxyacyl-ACP as the acyl donor. Is involved in the biosynthesis of lipid A, a phosphorylated glycolipid that anchors the lipopolysaccharide to the outer membrane of the cell. This Marinomonas sp. (strain MWYL1) protein is UDP-3-O-acylglucosamine N-acyltransferase.